Reading from the N-terminus, the 251-residue chain is 5'-nucleotidase SurE (251 aa).

A divalent metal cation is bound by residues D8, D9, S39, and N91.

Belongs to the SurE nucleotidase family. A divalent metal cation is required as a cofactor.

The protein localises to the cytoplasm. It catalyses the reaction a ribonucleoside 5'-phosphate + H2O = a ribonucleoside + phosphate. In terms of biological role, nucleotidase that shows phosphatase activity on nucleoside 5'-monophosphates. The polypeptide is 5'-nucleotidase SurE (Nitrosococcus oceani (strain ATCC 19707 / BCRC 17464 / JCM 30415 / NCIMB 11848 / C-107)).